A 181-amino-acid chain; its full sequence is Cytochrome c oxidase subunit 2 (181 aa).

Positions 126, 128, 130, 134, and 137 each coordinate Cu cation. Glu-128 provides a ligand contact to Mg(2+).

The protein belongs to the cytochrome c oxidase subunit 2 family. In terms of assembly, component of the cytochrome c oxidase (complex IV, CIV), a multisubunit enzyme composed of a catalytic core of 3 subunits and several supernumerary subunits. The complex exists as a monomer or a dimer and forms supercomplexes (SCs) in the inner mitochondrial membrane with ubiquinol-cytochrome c oxidoreductase (cytochrome b-c1 complex, complex III, CIII). The cofactor is Cu cation.

It localises to the mitochondrion inner membrane. It carries out the reaction 4 Fe(II)-[cytochrome c] + O2 + 8 H(+)(in) = 4 Fe(III)-[cytochrome c] + 2 H2O + 4 H(+)(out). Functionally, component of the cytochrome c oxidase, the last enzyme in the mitochondrial electron transport chain which drives oxidative phosphorylation. The respiratory chain contains 3 multisubunit complexes succinate dehydrogenase (complex II, CII), ubiquinol-cytochrome c oxidoreductase (cytochrome b-c1 complex, complex III, CIII) and cytochrome c oxidase (complex IV, CIV), that cooperate to transfer electrons derived from NADH and succinate to molecular oxygen, creating an electrochemical gradient over the inner membrane that drives transmembrane transport and the ATP synthase. Cytochrome c oxidase is the component of the respiratory chain that catalyzes the reduction of oxygen to water. Electrons originating from reduced cytochrome c in the intermembrane space (IMS) are transferred via the dinuclear copper A center (CU(A)) of subunit 2 and heme A of subunit 1 to the active site in subunit 1, a binuclear center (BNC) formed by heme A3 and copper B (CU(B)). The BNC reduces molecular oxygen to 2 water molecules using 4 electrons from cytochrome c in the IMS and 4 protons from the mitochondrial matrix. In Paramecium primaurelia, this protein is Cytochrome c oxidase subunit 2 (COII).